We begin with the raw amino-acid sequence, 202 residues long: Urease accessory protein UreG (202 aa).

11–18 contributes to the GTP binding site; that stretch reads GPVGSGKT.

The protein belongs to the SIMIBI class G3E GTPase family. UreG subfamily. In terms of assembly, homodimer. UreD, UreF and UreG form a complex that acts as a GTP-hydrolysis-dependent molecular chaperone, activating the urease apoprotein by helping to assemble the nickel containing metallocenter of UreC. The UreE protein probably delivers the nickel.

The protein resides in the cytoplasm. Functionally, facilitates the functional incorporation of the urease nickel metallocenter. This process requires GTP hydrolysis, probably effectuated by UreG. In Magnetococcus marinus (strain ATCC BAA-1437 / JCM 17883 / MC-1), this protein is Urease accessory protein UreG.